Here is a 695-residue protein sequence, read N- to C-terminus: GRB2-associated-binding protein 1 (695 aa).

Residue serine 2 is modified to N-acetylserine. A PH domain is found at 5–116 (EVVCSGWLRK…WVRCICDICG (112 aa)). Residues 204–229 (AKPTFSETDCNDNVPSHQTPASSQSK) form a disordered region. The span at 206–229 (PTFSETDCNDNVPSHQTPASSQSK) shows a compositional bias: polar residues. 4 positions are modified to phosphoserine: serine 251, serine 253, serine 266, and serine 304. Positions 306–387 (SYDIPPTPGN…PAGMTPSRSN (82 aa)) are disordered. A compositionally biased stretch (polar residues) spans 314 to 334 (GNTYQIPRTFPESTLGQSSKL). Threonine 388 carries the phosphothreonine modification. Residues serine 403 and serine 455 each carry the phosphoserine modification. The segment at 453 to 659 (PNSPPRQHSG…GSSMADERVD (207 aa)) is disordered. Composition is skewed to polar residues over residues 457 to 466 (PRQHSGSFTE) and 605 to 617 (FASNSLDGGSSPM). Residue tyrosine 628 is modified to Phosphotyrosine. The residue at position 639 (threonine 639) is a Phosphothreonine. Position 652 is a phosphoserine (serine 652). Position 660 is a phosphotyrosine (tyrosine 660). Residues 671-695 (LKSTREAWTDGRQSTESETPTKNVK) form a disordered region. Basic and acidic residues predominate over residues 673–685 (STREAWTDGRQST). Residue serine 684 is modified to Phosphoserine. Over residues 686-695 (ESETPTKNVK) the composition is skewed to polar residues.

The protein belongs to the GAB family. As to quaternary structure, identified in a complex containing FRS2, GRB2, GAB1, PIK3R1 and SOS1. Forms a tripartite complex containing GAB1, METTL13 and SPRY2. Within the complex interacts with METTL13. Interacts with GRB2 and with other SH2-containing proteins. Interacts with phosphorylated LAT2. Interacts with PTPRJ. Interacts (phosphorylated) with PTPN11. Interacts with HCK. Phosphorylated on tyrosine residue(s) by the epidermal growth factor receptor (EGFR) and the insulin receptor (INSR). Tyrosine phosphorylation of GAB1 mediates interaction with several proteins that contain SH2 domains. Phosphorylated on tyrosine residues by HCK upon IL6 signaling. Phosphorylated in response to FGFR1 activation. In terms of tissue distribution, expressed in the inner ear (at protein level). Expression is detected in the cochlear duct, spiral limbus region, efferent and afferent nerves, and in spiral ganglion neurons (at protein level).

In terms of biological role, adapter protein that plays a role in intracellular signaling cascades triggered by activated receptor-type kinases. Plays a role in FGFR1 signaling. Probably involved in signaling by the epidermal growth factor receptor (EGFR) and the insulin receptor (INSR). Involved in the MET/HGF-signaling pathway. The sequence is that of GRB2-associated-binding protein 1 (Gab1) from Mus musculus (Mouse).